A 330-amino-acid polypeptide reads, in one-letter code: Ketol-acid reductoisomerase (NADP(+)) (330 aa).

Positions 3-184 (LPVYYDKDID…GGGRMGVLKT (182 aa)) constitute a KARI N-terminal Rossmann domain. Residues 26–29 (YGAQ), Ser52, and Ser54 each bind NADP(+). His109 is an active-site residue. Gly135 serves as a coordination point for NADP(+). Residues 185 to 329 (SFKEECESDL…EILRAPFNHK (145 aa)) enclose the KARI C-terminal knotted domain. The Mg(2+) site is built by Asp193, Glu197, Glu229, and Glu233. Ser254 serves as a coordination point for substrate.

It belongs to the ketol-acid reductoisomerase family. Requires Mg(2+) as cofactor.

The catalysed reaction is (2R)-2,3-dihydroxy-3-methylbutanoate + NADP(+) = (2S)-2-acetolactate + NADPH + H(+). The enzyme catalyses (2R,3R)-2,3-dihydroxy-3-methylpentanoate + NADP(+) = (S)-2-ethyl-2-hydroxy-3-oxobutanoate + NADPH + H(+). It participates in amino-acid biosynthesis; L-isoleucine biosynthesis; L-isoleucine from 2-oxobutanoate: step 2/4. It functions in the pathway amino-acid biosynthesis; L-valine biosynthesis; L-valine from pyruvate: step 2/4. In terms of biological role, involved in the biosynthesis of branched-chain amino acids (BCAA). Catalyzes an alkyl-migration followed by a ketol-acid reduction of (S)-2-acetolactate (S2AL) to yield (R)-2,3-dihydroxy-isovalerate. In the isomerase reaction, S2AL is rearranged via a Mg-dependent methyl migration to produce 3-hydroxy-3-methyl-2-ketobutyrate (HMKB). In the reductase reaction, this 2-ketoacid undergoes a metal-dependent reduction by NADPH to yield (R)-2,3-dihydroxy-isovalerate. This chain is Ketol-acid reductoisomerase (NADP(+)), found in Helicobacter pylori (strain HPAG1).